We begin with the raw amino-acid sequence, 105 residues long: Large ribosomal subunit protein uL24 (105 aa).

It belongs to the universal ribosomal protein uL24 family. As to quaternary structure, part of the 50S ribosomal subunit.

One of two assembly initiator proteins, it binds directly to the 5'-end of the 23S rRNA, where it nucleates assembly of the 50S subunit. In terms of biological role, one of the proteins that surrounds the polypeptide exit tunnel on the outside of the subunit. The polypeptide is Large ribosomal subunit protein uL24 (Mycolicibacterium vanbaalenii (strain DSM 7251 / JCM 13017 / BCRC 16820 / KCTC 9966 / NRRL B-24157 / PYR-1) (Mycobacterium vanbaalenii)).